The following is a 658-amino-acid chain: Cysteine-rich receptor-like protein kinase 36 (658 aa).

Positions 1–26 (MERSNLFHIPCFLLLFLLFNINGVHT) are cleaved as a signal peptide. Gnk2-homologous domains are found at residues 27–128 (TFVC…NIHR) and 139–246 (NVPH…DYRF). Residues 27–281 (TFVCGDEDFS…KKGRMFQPWS (255 aa)) are Extracellular-facing. 5 N-linked (GlcNAc...) asparagine glycosylation sites follow: asparagine 38, asparagine 64, asparagine 116, asparagine 150, and asparagine 163. Residues 282 to 302 (VVVVVFPTGINLAVFVAFVLA) traverse the membrane as a helical segment. Residues 303–658 (YRRMRRRIYT…EVSITVLYPR (356 aa)) lie on the Cytoplasmic side of the membrane. The Protein kinase domain maps to 340–612 (FSLENKLGQG…ITWLARDGTF (273 aa)). ATP is bound by residues 346 to 354 (LGQGGFGSV) and lysine 368. Tyrosine 413 carries the phosphotyrosine modification. Aspartate 465 acts as the Proton acceptor in catalysis. The residue at position 469 (serine 469) is a Phosphoserine. Threonine 505 carries the post-translational modification Phosphothreonine. Phosphotyrosine is present on tyrosine 513.

It belongs to the protein kinase superfamily. Ser/Thr protein kinase family. CRK subfamily. Interacts with CRK45. Post-translationally, autophosphorylated.

The protein resides in the cell membrane. It catalyses the reaction L-seryl-[protein] + ATP = O-phospho-L-seryl-[protein] + ADP + H(+). It carries out the reaction L-threonyl-[protein] + ATP = O-phospho-L-threonyl-[protein] + ADP + H(+). Its function is as follows. Forms a complex with CRK45 that may negatively control abscisic acid (ABA) and osmotic stress signal transduction. Can phosphorylate CRK45 in vitro. This Arabidopsis thaliana (Mouse-ear cress) protein is Cysteine-rich receptor-like protein kinase 36.